Here is a 220-residue protein sequence, read N- to C-terminus: N-(5'-phosphoribosyl)anthranilate isomerase (220 aa).

The protein belongs to the TrpF family.

It catalyses the reaction N-(5-phospho-beta-D-ribosyl)anthranilate = 1-(2-carboxyphenylamino)-1-deoxy-D-ribulose 5-phosphate. The protein operates within amino-acid biosynthesis; L-tryptophan biosynthesis; L-tryptophan from chorismate: step 3/5. This chain is N-(5'-phosphoribosyl)anthranilate isomerase, found in Xylella fastidiosa (strain 9a5c).